The following is a 156-amino-acid chain: Small ribosomal subunit protein uS7 (156 aa).

The protein belongs to the universal ribosomal protein uS7 family. Part of the 30S ribosomal subunit. Contacts proteins S9 and S11.

In terms of biological role, one of the primary rRNA binding proteins, it binds directly to 16S rRNA where it nucleates assembly of the head domain of the 30S subunit. Is located at the subunit interface close to the decoding center, probably blocks exit of the E-site tRNA. This is Small ribosomal subunit protein uS7 from Chromobacterium violaceum (strain ATCC 12472 / DSM 30191 / JCM 1249 / CCUG 213 / NBRC 12614 / NCIMB 9131 / NCTC 9757 / MK).